Here is a 151-residue protein sequence, read N- to C-terminus: Ribosome maturation factor RimP (151 aa).

This sequence belongs to the RimP family.

The protein resides in the cytoplasm. Required for maturation of 30S ribosomal subunits. The sequence is that of Ribosome maturation factor RimP from Colwellia psychrerythraea (strain 34H / ATCC BAA-681) (Vibrio psychroerythus).